The following is a 552-amino-acid chain: Dihydroxy-acid dehydratase (552 aa).

C46 lines the [2Fe-2S] cluster pocket. D78 contributes to the Mg(2+) binding site. C119 is a binding site for [2Fe-2S] cluster. Residues D120 and K121 each contribute to the Mg(2+) site. At K121 the chain carries N6-carboxylysine. C191 serves as a coordination point for [2Fe-2S] cluster. E442 is a Mg(2+) binding site. Residue S468 is the Proton acceptor of the active site.

This sequence belongs to the IlvD/Edd family. In terms of assembly, homodimer. Requires [2Fe-2S] cluster as cofactor. The cofactor is Mg(2+).

The enzyme catalyses (2R)-2,3-dihydroxy-3-methylbutanoate = 3-methyl-2-oxobutanoate + H2O. It catalyses the reaction (2R,3R)-2,3-dihydroxy-3-methylpentanoate = (S)-3-methyl-2-oxopentanoate + H2O. The protein operates within amino-acid biosynthesis; L-isoleucine biosynthesis; L-isoleucine from 2-oxobutanoate: step 3/4. It functions in the pathway amino-acid biosynthesis; L-valine biosynthesis; L-valine from pyruvate: step 3/4. Functions in the biosynthesis of branched-chain amino acids. Catalyzes the dehydration of (2R,3R)-2,3-dihydroxy-3-methylpentanoate (2,3-dihydroxy-3-methylvalerate) into 2-oxo-3-methylpentanoate (2-oxo-3-methylvalerate) and of (2R)-2,3-dihydroxy-3-methylbutanoate (2,3-dihydroxyisovalerate) into 2-oxo-3-methylbutanoate (2-oxoisovalerate), the penultimate precursor to L-isoleucine and L-valine, respectively. This is Dihydroxy-acid dehydratase from Picrophilus torridus (strain ATCC 700027 / DSM 9790 / JCM 10055 / NBRC 100828 / KAW 2/3).